We begin with the raw amino-acid sequence, 396 residues long: Bifunctional enzyme Fae/Hps (396 aa).

The interval 1 to 161 (MYQIGEALIG…YEKDRGVHAI (161 aa)) is formaldehyde-activating enzyme. The active-site Proton donor is His-17. Substrate is bound by residues Asp-19, Leu-48, Lys-66, Thr-68, and Gln-83. Residues 162–396 (MGYKITRLWD…IDQYRIMTDF (235 aa)) form a 3-hexulose-6-phosphate synthase region.

It in the N-terminal section; belongs to the formaldehyde-activating enzyme family. This sequence in the C-terminal section; belongs to the HPS/KGPDC family. HPS subfamily.

The catalysed reaction is 5,6,7,8-tetrahydromethanopterin + formaldehyde = 5,10-methylenetetrahydromethanopterin + H2O. It catalyses the reaction D-ribulose 5-phosphate + formaldehyde = D-arabino-hex-3-ulose 6-phosphate. It participates in carbohydrate biosynthesis; D-ribose 5-phosphate biosynthesis. In terms of biological role, catalyzes the condensation of formaldehyde with tetrahydromethanopterin (H(4)MPT) to 5,10-methylenetetrahydromethanopterin. Catalyzes the reversible formation of ribulose-5-phosphate and formaldehyde from 3-hexulose-6-phosphate. The chain is Bifunctional enzyme Fae/Hps from Methanocella arvoryzae (strain DSM 22066 / NBRC 105507 / MRE50).